The chain runs to 96 residues: Large ribosomal subunit protein bL25 (96 aa).

This sequence belongs to the bacterial ribosomal protein bL25 family. Part of the 50S ribosomal subunit; part of the 5S rRNA/L5/L18/L25 subcomplex. Contacts the 5S rRNA. Binds to the 5S rRNA independently of L5 and L18.

Functionally, this is one of the proteins that binds to the 5S RNA in the ribosome where it forms part of the central protuberance. In Francisella tularensis subsp. tularensis (strain FSC 198), this protein is Large ribosomal subunit protein bL25.